The following is a 346-amino-acid chain: Sesquiterpene synthase Agr1 (346 aa).

Positions 98, 234, 238, and 242 each coordinate Mg(2+). The short motif at 98–102 (DNLSD) is the DDXXD motif element. (2E,6E)-farnesyl diphosphate contacts are provided by Arg-322 and Tyr-323.

This sequence belongs to the terpene synthase family. Requires Mg(2+) as cofactor.

The enzyme catalyses (2E,6E)-farnesyl diphosphate = delta-cadinene + diphosphate. It catalyses the reaction (2E,6E)-farnesyl diphosphate = alpha-muurolene + diphosphate. The catalysed reaction is (2E,6E)-farnesyl diphosphate = gamma-muurolene + diphosphate. It carries out the reaction (2E,6E)-farnesyl diphosphate = alpha-selinene + diphosphate. Terpene cyclase that catalyzes the cyclization of farnesyl diphosphate (FPP) to various sesquiterpenes, including alpha-muurolene, gamma-muurolene, alpha-selinene, beta-selinene, delta-cadinene, alpha-cadinol and delta-cadinol. Delta-cadinene is the major product of Agr1. This is Sesquiterpene synthase Agr1 from Cyclocybe aegerita (Black poplar mushroom).